The primary structure comprises 433 residues: Trigger factor (433 aa).

The region spanning 161–246 is the PPIase FKBP-type domain; sequence DSRVTIDFIG…LHKVEAQELP (86 aa).

The protein belongs to the FKBP-type PPIase family. Tig subfamily.

It is found in the cytoplasm. The enzyme catalyses [protein]-peptidylproline (omega=180) = [protein]-peptidylproline (omega=0). Involved in protein export. Acts as a chaperone by maintaining the newly synthesized protein in an open conformation. Functions as a peptidyl-prolyl cis-trans isomerase. This is Trigger factor from Photobacterium profundum (strain SS9).